The chain runs to 306 residues: MAQVKRIRRKVDGIILLDKPRGFTSNAALQKVRWLLNAEKAGHTGSLDPLATGVLPLCFGEATKFSQYLLDADKGYETVAQLGVTTTTGDAEGEVLERRPVTVGRPEIEALLPRFRGEIKQIPPMYSALKKDGQPLYKLARAGEVVEREARSVTIARLELLALEGEQARLSVDCSKGTYIRTLVEDLGQLLGCGAHVAELRRTKAGPFELARTVTLEELEAVHAEGGSEALDRFLQPVDSGLQDWPLLQFSEHSAFYWLQGQPVRAPEAPKFGMVRVQDHNGRFIGIGEVSDDGRIAPRRLIYTGA.

Residue Asp48 is the Nucleophile of the active site.

It belongs to the pseudouridine synthase TruB family. Type 1 subfamily.

It carries out the reaction uridine(55) in tRNA = pseudouridine(55) in tRNA. Functionally, responsible for synthesis of pseudouridine from uracil-55 in the psi GC loop of transfer RNAs. The sequence is that of tRNA pseudouridine synthase B from Ectopseudomonas mendocina (strain ymp) (Pseudomonas mendocina).